The primary structure comprises 82 residues: Putative antimicrobial peptide 7848 (82 aa).

The N-terminal stretch at 1 to 17 (MNENLWAAPAPKKLSKH) is a signal peptide. The tract at residues 16-60 (KHFFGRGGPLGKETGPNLFPKKPGAGKGLGFPPTKKPRGQPRVLK) is disordered. Residues 38 to 82 (PGAGKGLGFPPTKKPRGQPRVLKKPKWNSEGLIGILHRGSDGVQF) constitute a propeptide that is removed on maturation. Over residues 50–60 (KKPRGQPRVLK) the composition is skewed to basic residues.

The protein belongs to the non-disulfide-bridged peptide (NDBP) superfamily. Short antimicrobial peptide (group 4) family. Expressed by the venom gland.

The protein resides in the secreted. The sequence is that of Putative antimicrobial peptide 7848 from Urodacus yaschenkoi (Inland robust scorpion).